The sequence spans 132 residues: Small ribosomal subunit protein uS8 (132 aa).

It belongs to the universal ribosomal protein uS8 family. As to quaternary structure, part of the 30S ribosomal subunit. Contacts proteins S5 and S12.

Functionally, one of the primary rRNA binding proteins, it binds directly to 16S rRNA central domain where it helps coordinate assembly of the platform of the 30S subunit. This is Small ribosomal subunit protein uS8 from Shouchella clausii (strain KSM-K16) (Alkalihalobacillus clausii).